A 379-amino-acid chain; its full sequence is ATP-sensitive inward rectifier potassium channel 10 (379 aa).

Over 1–61 (MTSVAKVYYS…LKDLWTTFID (61 aa)) the chain is Cytoplasmic. Arg-36 serves as a coordination point for 1,2-dioctanoyl-sn-glycero-3-phospho-(1D-myo-inositol-4,5-bisphosphate). A helical membrane pass occupies residues 62–88 (MQWRYKLLLFSATFAGTWFLFGVVWYL). The Extracellular portion of the chain corresponds to 89-114 (VAVAHGDLLELGPPANHTPCVVQVHT). A disulfide bond links Cys-108 and Cys-140. Positions 115–131 (LTGAFLFSLESQTTIGY) form an intramembrane region, discontinuously helical; Pore-forming. A Selectivity filter motif is present at residues 128–133 (TIGYGF). Residues 132–140 (GFRYISEEC) lie on the Extracellular side of the membrane. The helical transmembrane segment at 141 to 166 (PLAIVLLIAQLVLTTILEIFITGTFL) threads the bilayer. At 167-379 (AKIARPKKRA…SALSVRISNV (213 aa)) the chain is on the cytoplasmic side. 1,2-dioctanoyl-sn-glycero-3-phospho-(1D-myo-inositol-4,5-bisphosphate) contacts are provided by Lys-168, Arg-171, and Lys-173. 210–217 (GCQVTGKL) serves as a coordination point for ATP.

Belongs to the inward rectifier-type potassium channel (TC 1.A.2.1) family. KCNJ10 subfamily. As to quaternary structure, homotetramer. In kidney cells, it forms heteromeric channels with Kir5.1/KCNJ16; this interaction is required for KCNJ16 localization to the basolateral membrane. Interacts with MAGI1, alone and possibly as a heteromer with KCNJ16; this interaction may facilitate KCNJ10/KCNJ16 potassium channel expression at the basolateral membrane in kidney cells. Interacts with PATJ. As to expression, widely expressed in adult brain, including in the neocortex, the stratum pyrimadale of the hippocampus and the piriform cortex. Expressed by cultured astrocytes and also by cocultured cortical neurons (at protein level). In the distal segment of the nephron, expressed in the distal convoluted tubule, the connecting tubule, and the early cortical collecting duct.

The protein resides in the membrane. It is found in the basolateral cell membrane. The enzyme catalyses K(+)(in) = K(+)(out). With respect to regulation, channel activity is strongly regulated by variations of cytosolic pH; channels are activated by alkaline and inhibited by acidic pH values. Activated by phosphatidylinositol 4,5 biphosphate (PtdIns(4,5)P2). Inhibited by Ba(2+) and Cs(+). Its function is as follows. May be responsible for potassium buffering action of glial cells in the brain. Inward rectifier potassium channels are characterized by a greater tendency to allow potassium to flow into the cell rather than out of it. Their voltage dependence is regulated by the concentration of extracellular potassium; as external potassium is raised, the voltage range of the channel opening shifts to more positive voltages. The inward rectification is mainly due to the blockage of outward current by internal magnesium. Can be blocked by extracellular barium and cesium. In the kidney, together with KCNJ16, mediates basolateral K(+) recycling in distal tubules; this process is critical for Na(+) reabsorption at the tubules. This is ATP-sensitive inward rectifier potassium channel 10 from Mus musculus (Mouse).